Consider the following 318-residue polypeptide: TPR repeat-containing protein MJ0940 (318 aa).

TPR repeat units lie at residues 17 to 50, 84 to 117, 119 to 151, 152 to 185, 186 to 219, 221 to 254, 255 to 288, and 289 to 318; these read SLTY…NPDF, PVAY…EEKF, TAFF…APNF, IPAY…KEND, TNAI…LNVT, IEVI…RPDD, ASLW…MPHH, and TKAL…ALDR.

The protein is TPR repeat-containing protein MJ0940 of Methanocaldococcus jannaschii (strain ATCC 43067 / DSM 2661 / JAL-1 / JCM 10045 / NBRC 100440) (Methanococcus jannaschii).